The sequence spans 191 residues: Large ribosomal subunit protein bL12cz (191 aa).

The transit peptide at 1-58 (MASTTLSIATTIRSSSYPTLASINHFPSRTTTIEFPSRFGGGSSSTLTHRATHLRPIA) directs the protein to the chloroplast.

This sequence belongs to the bacterial ribosomal protein bL12 family.

The protein resides in the plastid. It is found in the chloroplast. This Arabidopsis thaliana (Mouse-ear cress) protein is Large ribosomal subunit protein bL12cz (RPL12A).